The primary structure comprises 307 residues: Elongation factor Ts (307 aa).

The involved in Mg(2+) ion dislocation from EF-Tu stretch occupies residues 80–83; it reads TDFV.

This sequence belongs to the EF-Ts family.

Its subcellular location is the cytoplasm. Functionally, associates with the EF-Tu.GDP complex and induces the exchange of GDP to GTP. It remains bound to the aminoacyl-tRNA.EF-Tu.GTP complex up to the GTP hydrolysis stage on the ribosome. In Bradyrhizobium sp. (strain ORS 278), this protein is Elongation factor Ts.